The sequence spans 650 residues: Acetyl-coenzyme A synthetase (650 aa).

Residues 191–194 (RGGR), threonine 311, and asparagine 335 each bind CoA. ATP contacts are provided by residues 387-389 (GEP), 411-416 (DTWWQT), aspartate 500, and arginine 515. Serine 523 is a binding site for CoA. Arginine 526 is an ATP binding site. Residues valine 537, histidine 539, and valine 542 each coordinate Mg(2+). Arginine 584 is a CoA binding site. N6-acetyllysine is present on lysine 609.

It belongs to the ATP-dependent AMP-binding enzyme family. It depends on Mg(2+) as a cofactor. Post-translationally, acetylated. Deacetylation by the SIR2-homolog deacetylase activates the enzyme.

The enzyme catalyses acetate + ATP + CoA = acetyl-CoA + AMP + diphosphate. In terms of biological role, catalyzes the conversion of acetate into acetyl-CoA (AcCoA), an essential intermediate at the junction of anabolic and catabolic pathways. AcsA undergoes a two-step reaction. In the first half reaction, AcsA combines acetate with ATP to form acetyl-adenylate (AcAMP) intermediate. In the second half reaction, it can then transfer the acetyl group from AcAMP to the sulfhydryl group of CoA, forming the product AcCoA. The sequence is that of Acetyl-coenzyme A synthetase from Shewanella sp. (strain MR-7).